The following is an 80-amino-acid chain: WAP four-disulfide core domain protein 15A (80 aa).

A signal peptide spans 1–20 (MKPSSLLLFTTTILLCLSMA). A WAP domain is found at 29–76 (VTPKQGYCPEFLLDCPFVLLPVCSRDKGCKGTKKCCFYYCQMRCVEPW). 4 disulfide bridges follow: C36–C64, C43–C68, C51–C63, and C57–C72.

It is found in the secreted. Functionally, antibacterial protein. In Mus musculus (Mouse), this protein is WAP four-disulfide core domain protein 15A.